The primary structure comprises 875 residues: Transcription factor tenR (875 aa).

The zn(2)-C6 fungal-type DNA-binding region spans 16–44 (CSECRRRKIRCDRGFPCGPCRKSLPALSC). Disordered stretches follow at residues 54–73 (AASAPPRPHTAQHQPRPKVN), 136–172 (DHEKKESTNHSRARQGYPGSTETINPGSVSHSAGVNP), and 620–642 (PHEDGPRSIQSQISSHAGQTGSR). 2 stretches are compositionally biased toward polar residues: residues 153 to 168 (PGSTETINPGSVSHSA) and 627 to 642 (SIQSQISSHAGQTGSR).

The protein resides in the nucleus. Its function is as follows. Transcription factor that positively regulates the expression of the genes that mediate the biosynthesis of tenellin-type 2-pyridones, iron-chelating compounds involved in iron stress tolerance, competition with the natural competitor fungus Metarhizium robertsii and insect hosts infection. The polypeptide is Transcription factor tenR (Beauveria bassiana (strain ARSEF 2860) (White muscardine disease fungus)).